Reading from the N-terminus, the 459-residue chain is Putrescine aminotransferase (459 aa).

Pyridoxal 5'-phosphate contacts are provided by residues 150 to 151 (GT) and glutamine 274. Lysine 300 is modified (N6-(pyridoxal phosphate)lysine). Position 332 (threonine 332) interacts with pyridoxal 5'-phosphate.

The protein belongs to the class-III pyridoxal-phosphate-dependent aminotransferase family. Putrescine aminotransferase subfamily. Requires pyridoxal 5'-phosphate as cofactor.

It carries out the reaction an alkane-alpha,omega-diamine + 2-oxoglutarate = an omega-aminoaldehyde + L-glutamate. It catalyses the reaction putrescine + 2-oxoglutarate = 1-pyrroline + L-glutamate + H2O. The catalysed reaction is cadaverine + 2-oxoglutarate = 5-aminopentanal + L-glutamate. Its pathway is amine and polyamine degradation; putrescine degradation; 4-aminobutanal from putrescine (transaminase route): step 1/1. In terms of biological role, catalyzes the aminotransferase reaction from putrescine to 2-oxoglutarate, leading to glutamate and 4-aminobutanal, which spontaneously cyclizes to form 1-pyrroline. This is the first step in one of two pathways for putrescine degradation, where putrescine is converted into 4-aminobutanoate (gamma-aminobutyrate or GABA) via 4-aminobutanal. Also functions as a cadaverine transaminase in a a L-lysine degradation pathway to succinate that proceeds via cadaverine, glutarate and L-2-hydroxyglutarate. This is Putrescine aminotransferase from Salmonella paratyphi A (strain ATCC 9150 / SARB42).